The primary structure comprises 65 residues: Chymotrypsin/elastase isoinhibitors 2 to 5 (65 aa).

Disulfide bonds link Cys4–Cys37, Cys13–Cys32, Cys16–Cys28, Cys20–Cys59, and Cys39–Cys53. Positions 4–59 (CGKNEVWTECTGCELKCGQDEKTPCALMCRPPSCECTPGRGMRRTHDGKCVPVSEC) constitute a TIL domain.

This sequence belongs to the serine protease inhibitor-like (TIL domain-containing) family.

It localises to the secreted. In terms of biological role, defends the organism against the host's proteinases. This Ascaris suum (Pig roundworm) protein is Chymotrypsin/elastase isoinhibitors 2 to 5.